The chain runs to 1143 residues: Disease resistance protein Pikm1-TS (1143 aa).

The segment at 1-190 (MEAAAMAVTA…PLRIMGGEMQ (190 aa)) is structured coiled coil (CC) domain. The HMA domain maps to 189 to 258 (MQKIVFKIPM…KVGPAMFLEV (70 aa)). The tract at residues 191–264 (KIVFKIPMVD…FLEVSQVKED (74 aa)) is HMA-like domain. Residues 282–570 (HEVKTICILG…WIAEGFVSEE (289 aa)) enclose the NB-ARC domain. 10 LRR repeats span residues 681-706 (FKRL…ICEQ), 708-731 (SLRV…MRKL), 732-754 (KHLE…IGEL), 756-777 (HLRI…IREL), 778-800 (QHLH…VGKL), 802-823 (NLKI…IGEL), 824-848 (NHLQ…QISQ), 945-968 (MPNL…INGT), 979-1002 (DSRV…EFKF), and 1004-1027 (AGPA…VFRC).

The protein belongs to the disease resistance NB-LRR family. In terms of assembly, interacts with AVR-Pik through its N-terminal part containing the HMA-like domain. Constitutively expressed.

In terms of biological role, disease resistance (R) protein that specifically recognizes the AVR-Pik effector avirulence protein from M.oryzae. Resistance proteins guard the plant against pathogens that contain an appropriate avirulence protein via an indirect interaction with this avirulence protein. That triggers a defense system including the hypersensitive response, which restricts the pathogen growth. Contribution of Pikm-2 is required to recognize the effector avirulence protein AVR-Pik. This Oryza sativa subsp. japonica (Rice) protein is Disease resistance protein Pikm1-TS.